A 312-amino-acid polypeptide reads, in one-letter code: tRNA dimethylallyltransferase (312 aa).

G13–T20 contributes to the ATP binding site. T15–T20 is a binding site for substrate. Interaction with substrate tRNA regions lie at residues D38 to Q41 and Q163 to R167.

The protein belongs to the IPP transferase family. As to quaternary structure, monomer. It depends on Mg(2+) as a cofactor.

It carries out the reaction adenosine(37) in tRNA + dimethylallyl diphosphate = N(6)-dimethylallyladenosine(37) in tRNA + diphosphate. Its function is as follows. Catalyzes the transfer of a dimethylallyl group onto the adenine at position 37 in tRNAs that read codons beginning with uridine, leading to the formation of N6-(dimethylallyl)adenosine (i(6)A). The polypeptide is tRNA dimethylallyltransferase (Exiguobacterium sibiricum (strain DSM 17290 / CCUG 55495 / CIP 109462 / JCM 13490 / 255-15)).